Consider the following 137-residue polypeptide: Small ribosomal subunit protein uS11 (137 aa).

Polar residues predominate over residues 1-10 (MPPKSRSTGP). 2 disordered regions span residues 1 to 27 (MPPK…IPHG) and 116 to 137 (GTIS…RRRV). Over residues 12 to 21 (KTQKTRRRDK) the composition is skewed to basic residues.

The protein belongs to the universal ribosomal protein uS11 family. Part of the 30S ribosomal subunit. Interacts with proteins S7 and S18. Binds to IF-3.

Its function is as follows. Located on the platform of the 30S subunit, it bridges several disparate RNA helices of the 16S rRNA. Forms part of the Shine-Dalgarno cleft in the 70S ribosome. The chain is Small ribosomal subunit protein uS11 from Rhodococcus erythropolis (strain PR4 / NBRC 100887).